Consider the following 76-residue polypeptide: ATP synthase subunit c (76 aa).

Helical transmembrane passes span Leu-13–Ile-33 and Phe-55–Phe-75.

It belongs to the ATPase C chain family. In terms of assembly, F-type ATPases have 2 components, F(1) - the catalytic core - and F(0) - the membrane proton channel. F(1) has five subunits: alpha(3), beta(3), gamma(1), delta(1), epsilon(1). F(0) has three main subunits: a(1), b(2) and c(10-14). The alpha and beta chains form an alternating ring which encloses part of the gamma chain. F(1) is attached to F(0) by a central stalk formed by the gamma and epsilon chains, while a peripheral stalk is formed by the delta and b chains.

Its subcellular location is the cell membrane. Functionally, f(1)F(0) ATP synthase produces ATP from ADP in the presence of a proton or sodium gradient. F-type ATPases consist of two structural domains, F(1) containing the extramembraneous catalytic core and F(0) containing the membrane proton channel, linked together by a central stalk and a peripheral stalk. During catalysis, ATP synthesis in the catalytic domain of F(1) is coupled via a rotary mechanism of the central stalk subunits to proton translocation. Key component of the F(0) channel; it plays a direct role in translocation across the membrane. A homomeric c-ring of between 10-14 subunits forms the central stalk rotor element with the F(1) delta and epsilon subunits. The sequence is that of ATP synthase subunit c from Bifidobacterium animalis subsp. lactis (strain AD011).